A 121-amino-acid chain; its full sequence is Acidic phospholipase A2 PLA-1 (121 aa).

Intrachain disulfides connect Cys26/Cys115, Cys28/Cys44, Cys43/Cys95, Cys49/Cys121, Cys50/Cys88, Cys57/Cys81, and Cys75/Cys86. Ca(2+) contacts are provided by Tyr27, Gly29, and Gly31. His47 is a catalytic residue. Asp48 lines the Ca(2+) pocket. Asp89 is a catalytic residue.

Belongs to the phospholipase A2 family. Group II subfamily. D49 sub-subfamily. It depends on Ca(2+) as a cofactor. Expressed by the venom gland.

It is found in the secreted. It catalyses the reaction a 1,2-diacyl-sn-glycero-3-phosphocholine + H2O = a 1-acyl-sn-glycero-3-phosphocholine + a fatty acid + H(+). Its function is as follows. PLA2 catalyzes the calcium-dependent hydrolysis of the 2-acyl groups in 3-sn-phosphoglycerides. This is Acidic phospholipase A2 PLA-1 from Eristicophis macmahoni (Leaf-nosed viper).